The chain runs to 72 residues: Protein SlyX homolog (72 aa).

Belongs to the SlyX family.

The sequence is that of Protein SlyX homolog from Bradyrhizobium diazoefficiens (strain JCM 10833 / BCRC 13528 / IAM 13628 / NBRC 14792 / USDA 110).